A 493-amino-acid chain; its full sequence is Dipeptide permease D (493 aa).

Transmembrane regions (helical) follow at residues 14–34 (VVALQIWEYFSFYGMRALLIL), 49–69 (ELFSAYCSLVYVTPILGGYLA), 91–111 (LVLGASEIAPTFLYLSLAIIV), 138–158 (GGFSLLYAAGNIGSIVAPIAC), 167–187 (WAMGFALAAIGMLAGLVIFLC), 212–232 (NWGWLLILLVAAPLLITVLFW), 235–255 (WSVYALIVATAIGLVVLAKIY), 267–287 (LGLIVTLTLFSMLFWAFAQQG), 312–332 (MFQSVNAFAVMLCGVVLAWLV), 344–364 (IWGKFALGLGLMSAGFCILTL), 379–399 (LMVLGLAVMGFAELFIDPVAM), 413–433 (VLTGIYMLLSGAIANYLAGVI), and 458–478 (VFEQITWGALACVGVVLLIWL).

Belongs to the major facilitator superfamily. Proton-dependent oligopeptide transporter (POT/PTR) (TC 2.A.17) family. DtpD subfamily.

It is found in the cell inner membrane. Probable proton-dependent permease that transports dipeptides. The chain is Dipeptide permease D from Salmonella typhimurium (strain 14028s / SGSC 2262).